The sequence spans 87 residues: Small polypeptide ROTUNDIFOLIA LIKE 2 (87 aa).

A helical transmembrane segment spans residues 19–35; sequence LIPHTSHYILQLVYLHL. Positions 56–87 are required for DVL/RTFL small polypeptide activity; that stretch reads GQMGRLNRAFREKRARFYIFRRCVIMLLRWSD.

The protein belongs to the DVL/RTFL small polypeptides family.

Its subcellular location is the cell membrane. Functionally, small polypeptide acting as a regulatory molecule which coordinates cellular responses required for differentiation, growth and development, probably by restricting polar cell proliferation in lateral organs. The sequence is that of Small polypeptide ROTUNDIFOLIA LIKE 2 from Oryza sativa subsp. japonica (Rice).